Here is a 224-residue protein sequence, read N- to C-terminus: Probable GTP-binding protein EngB (224 aa).

In terms of domain architecture, EngB-type G spans 31–205; the sequence is IGVEIAFAGR…LSILNDWCHP (175 aa). GTP contacts are provided by residues 39 to 46, 66 to 70, 84 to 87, 151 to 154, and 184 to 186; these read GRSNAGKS, GRTQL, DLPG, TKSD, and LSS. Mg(2+) is bound by residues serine 46 and threonine 68.

It belongs to the TRAFAC class TrmE-Era-EngA-EngB-Septin-like GTPase superfamily. EngB GTPase family. Requires Mg(2+) as cofactor.

In terms of biological role, necessary for normal cell division and for the maintenance of normal septation. The protein is Probable GTP-binding protein EngB of Shewanella frigidimarina (strain NCIMB 400).